Reading from the N-terminus, the 657-residue chain is Probable alpha-galactosidase D (657 aa).

An N-terminal signal peptide occupies residues Met-1–Gly-16. 2 N-linked (GlcNAc...) asparagine glycosylation sites follow: Asn-47 and Asn-91. An intrachain disulfide couples Cys-124 to Cys-157. Asp-155 functions as the Nucleophile in the catalytic mechanism. 2 N-linked (GlcNAc...) asparagine glycosylation sites follow: Asn-182 and Asn-191. Glu-200–Asp-204 contributes to the substrate binding site. Catalysis depends on Asp-222, which acts as the Proton donor. N-linked (GlcNAc...) asparagine glycans are attached at residues Asn-291, Asn-438, Asn-460, Asn-505, Asn-539, Asn-543, and Asn-582.

Belongs to the glycosyl hydrolase 27 family.

The protein resides in the secreted. The enzyme catalyses Hydrolysis of terminal, non-reducing alpha-D-galactose residues in alpha-D-galactosides, including galactose oligosaccharides, galactomannans and galactolipids.. Functionally, hydrolyzes a variety of simple alpha-D-galactoside as well as more complex molecules such as oligosaccharides and polysaccharides. The protein is Probable alpha-galactosidase D (aglD) of Aspergillus oryzae (strain ATCC 42149 / RIB 40) (Yellow koji mold).